The sequence spans 536 residues: Putative cysteine ligase BshC (536 aa).

Belongs to the BshC family.

Its function is as follows. Involved in bacillithiol (BSH) biosynthesis. May catalyze the last step of the pathway, the addition of cysteine to glucosamine malate (GlcN-Mal) to generate BSH. This is Putative cysteine ligase BshC from Anoxybacillus flavithermus (strain DSM 21510 / WK1).